The primary structure comprises 79 residues: ATP synthase subunit c (79 aa).

Transmembrane regions (helical) follow at residues I11–L31 and F53–Y73.

It belongs to the ATPase C chain family. As to quaternary structure, F-type ATPases have 2 components, F(1) - the catalytic core - and F(0) - the membrane proton channel. F(1) has five subunits: alpha(3), beta(3), gamma(1), delta(1), epsilon(1). F(0) has three main subunits: a(1), b(2) and c(10-14). The alpha and beta chains form an alternating ring which encloses part of the gamma chain. F(1) is attached to F(0) by a central stalk formed by the gamma and epsilon chains, while a peripheral stalk is formed by the delta and b chains.

Its subcellular location is the cell inner membrane. Functionally, f(1)F(0) ATP synthase produces ATP from ADP in the presence of a proton or sodium gradient. F-type ATPases consist of two structural domains, F(1) containing the extramembraneous catalytic core and F(0) containing the membrane proton channel, linked together by a central stalk and a peripheral stalk. During catalysis, ATP synthesis in the catalytic domain of F(1) is coupled via a rotary mechanism of the central stalk subunits to proton translocation. In terms of biological role, key component of the F(0) channel; it plays a direct role in translocation across the membrane. A homomeric c-ring of between 10-14 subunits forms the central stalk rotor element with the F(1) delta and epsilon subunits. The protein is ATP synthase subunit c of Blochmanniella floridana.